Consider the following 146-residue polypeptide: MTLTKGSFTYSSGEEYRGEWKEGRRHGFGQLMFADGGTYLGHFENGLFNGFGVLTFSDGSRYEGEFAQGKFNGVGVFIRYDNMTFEGEFKNGRVDGFGLLTFPDGSHGIPRNEGLFENNKLLRREKCSAIVQRAQSASKSARNLTA.

MORN repeat units follow at residues 16–38 (YRGE…DGGT), 39–61 (YLGH…DGSR), 62–84 (YEGE…DNMT), and 85–107 (FEGE…DGSH).

As to quaternary structure, interacts with MYO3A.

Its subcellular location is the cytoplasm. The protein resides in the cell projection. It localises to the filopodium tip. It is found in the stereocilium. Its function is as follows. Plays a role in promoting axonal degeneration following neuronal injury by toxic insult or trauma. This chain is MORN repeat-containing protein 4 (MORN4), found in Homo sapiens (Human).